Reading from the N-terminus, the 173-residue chain is Protein-export protein SecB (173 aa).

Residues 148 to 173 (QQQKQRREQGTSDSAPSGSPDNGGRQ) form a disordered region. The span at 158–167 (TSDSAPSGSP) shows a compositional bias: polar residues.

The protein belongs to the SecB family. As to quaternary structure, homotetramer, a dimer of dimers. One homotetramer interacts with 1 SecA dimer.

It localises to the cytoplasm. Its function is as follows. One of the proteins required for the normal export of preproteins out of the cell cytoplasm. It is a molecular chaperone that binds to a subset of precursor proteins, maintaining them in a translocation-competent state. It also specifically binds to its receptor SecA. The polypeptide is Protein-export protein SecB (Halorhodospira halophila (strain DSM 244 / SL1) (Ectothiorhodospira halophila (strain DSM 244 / SL1))).